The primary structure comprises 507 residues: Chromosomal replication initiator protein DnaA (507 aa).

Positions 1–112 are domain I, interacts with DnaA modulators; sequence MTDDPGSGFT…PATDEADDTT (112 aa). Residues 99–162 form a disordered region; it reads RIAPPATDEA…ERPRNTDSAT (64 aa). Residues 113–127 show a composition bias toward polar residues; that stretch reads VPPSENPATTSPDTT. Residues 113 to 166 are domain II; sequence VPPSENPATTSPDTTTDNDEIDDSAAARGDNQHSWPSYFTERPRNTDSATAGVT. Residues 167-383 form a domain III, AAA+ region region; the sequence is SLNRRYTFDT…GALIRVTAFA (217 aa). ATP is bound by residues glycine 211, glycine 213, lysine 214, and threonine 215. A domain IV, binds dsDNA region spans residues 384–507; it reads SLNKTPIDKA…TTRIRQRSKR (124 aa).

Belongs to the DnaA family. In terms of assembly, oligomerizes as a right-handed, spiral filament on DNA at oriC.

It localises to the cytoplasm. Plays an essential role in the initiation and regulation of chromosomal replication. ATP-DnaA binds to the origin of replication (oriC) to initiate formation of the DNA replication initiation complex once per cell cycle. Binds the DnaA box (a 9 base pair repeat at the origin) and separates the double-stranded (ds)DNA. Forms a right-handed helical filament on oriC DNA; dsDNA binds to the exterior of the filament while single-stranded (ss)DNA is stabiized in the filament's interior. The ATP-DnaA-oriC complex binds and stabilizes one strand of the AT-rich DNA unwinding element (DUE), permitting loading of DNA polymerase. After initiation quickly degrades to an ADP-DnaA complex that is not apt for DNA replication. Binds acidic phospholipids. This chain is Chromosomal replication initiator protein DnaA, found in Mycobacterium bovis (strain BCG / Tokyo 172 / ATCC 35737 / TMC 1019).